We begin with the raw amino-acid sequence, 179 residues long: Orotate phosphoribosyltransferase (179 aa).

5-phospho-alpha-D-ribose 1-diphosphate is bound by residues Arg-24, Arg-89, Lys-90, Lys-93, and 115 to 123; that span reads EDVITTGGA. 2 residues coordinate orotate: Thr-119 and Arg-147.

The protein belongs to the purine/pyrimidine phosphoribosyltransferase family. PyrE subfamily. As to quaternary structure, homodimer. The cofactor is Mg(2+).

The enzyme catalyses orotidine 5'-phosphate + diphosphate = orotate + 5-phospho-alpha-D-ribose 1-diphosphate. The protein operates within pyrimidine metabolism; UMP biosynthesis via de novo pathway; UMP from orotate: step 1/2. Its function is as follows. Catalyzes the transfer of a ribosyl phosphate group from 5-phosphoribose 1-diphosphate to orotate, leading to the formation of orotidine monophosphate (OMP). In Nocardioides sp. (strain ATCC BAA-499 / JS614), this protein is Orotate phosphoribosyltransferase.